We begin with the raw amino-acid sequence, 367 residues long: Beta sliding clamp (367 aa).

The protein belongs to the beta sliding clamp family. Forms a ring-shaped head-to-tail homodimer around DNA which binds and tethers DNA polymerases and other proteins to the DNA. The DNA replisome complex has a single clamp-loading complex (3 tau and 1 each of delta, delta', psi and chi subunits) which binds 3 Pol III cores (1 core on the leading strand and 2 on the lagging strand) each with a beta sliding clamp dimer. Additional proteins in the replisome are other copies of gamma, psi and chi, Ssb, DNA helicase and RNA primase.

It is found in the cytoplasm. In terms of biological role, confers DNA tethering and processivity to DNA polymerases and other proteins. Acts as a clamp, forming a ring around DNA (a reaction catalyzed by the clamp-loading complex) which diffuses in an ATP-independent manner freely and bidirectionally along dsDNA. Initially characterized for its ability to contact the catalytic subunit of DNA polymerase III (Pol III), a complex, multichain enzyme responsible for most of the replicative synthesis in bacteria; Pol III exhibits 3'-5' exonuclease proofreading activity. The beta chain is required for initiation of replication as well as for processivity of DNA replication. In Pseudomonas putida (strain ATCC 47054 / DSM 6125 / CFBP 8728 / NCIMB 11950 / KT2440), this protein is Beta sliding clamp (dnaN).